The primary structure comprises 394 residues: Ribulose bisphosphate carboxylase large chain (394 aa).

K5 bears the N6,N6,N6-trimethyllysine mark. N114 and T164 together coordinate substrate. The active-site Proton acceptor is K166. Residue K168 coordinates substrate. K192, D194, and E195 together coordinate Mg(2+). The residue at position 192 (K192) is an N6-carboxylysine. H285 functions as the Proton acceptor in the catalytic mechanism. Positions 286, 318, and 370 each coordinate substrate.

This sequence belongs to the RuBisCO large chain family. Type I subfamily. In terms of assembly, heterohexadecamer of 8 large chains and 8 small chains. Mg(2+) is required as a cofactor.

The protein localises to the plastid. It is found in the chloroplast. It catalyses the reaction 2 (2R)-3-phosphoglycerate + 2 H(+) = D-ribulose 1,5-bisphosphate + CO2 + H2O. It carries out the reaction D-ribulose 1,5-bisphosphate + O2 = 2-phosphoglycolate + (2R)-3-phosphoglycerate + 2 H(+). Functionally, ruBisCO catalyzes two reactions: the carboxylation of D-ribulose 1,5-bisphosphate, the primary event in carbon dioxide fixation, as well as the oxidative fragmentation of the pentose substrate in the photorespiration process. Both reactions occur simultaneously and in competition at the same active site. This chain is Ribulose bisphosphate carboxylase large chain (rbcL), found in Victoria cruziana (Santa Cruz water lily).